The sequence spans 375 residues: Trans-enoyl reductase BOA5 (375 aa).

A compositionally biased stretch (polar residues) spans 1–16 (MQAVIQTGPGTLQLTE). The segment at 1–21 (MQAVIQTGPGTLQLTENVPKP) is disordered. 42-45 (SDWK) is a binding site for NADP(+). Residue 121 to 128 (VGIVTTGL) participates in substrate binding. A disordered region spans residues 147–168 (GSAAPQKTRVGPRGWSGGDALT). Residues 185–188 (STST), 208–211 (SPHN), Tyr226, and 273–274 (LD) each bind NADP(+). 294-298 (ALTIF) contacts substrate. Position 363–364 (363–364 (VS)) interacts with NADP(+).

Belongs to the zinc-containing alcohol dehydrogenase family. Monomer.

The protein operates within polyketide biosynthesis. Trans-enoyl reductase; part of the gene cluster A that mediates the biosynthesis of botcinic acid and its botcinin derivatives, acetate-derived polyketides that contribute to virulence when combined with the sesquiterpene botrydial. Botcinic acid and its derivatives have been shown to induce chlorosis and necrosis during host plant infection, but also have antifungal activities. Two polyketide synthases, BOA6 and BOA9, are involved in the biosynthesis of botcinins. BOA6 mediates the formation of the per-methylated tetraketide core by condensation of four units of malonyl-CoA with one unit of acetyl-CoA, which would be methylated in activated methylene groups to yield a bicyclic acid intermediate that could then either be converted to botrylactone derivatives or lose the starter acetate unit through a retro-Claisen type C-C bond cleavage to yield botcinin derivatives. The second polyketide synthase, BOA9, is probably required for the biosynthesis of the tetraketide side chain of botcinins. The methyltransferase (MT) domain within BOA6 is probably responsible for the incorporation of four methyl groups. The trans-enoyl reductase BOA5 might take over the enoyl reductase function of BOA6 that misses an ER domain. The monooxygenases BOA2, BOA3 and BOA4 might be involved in further hydroxylations at C4, C5 and C8, whereas BOA7, close to BOA9, could potentially be involved in the hydroxylation at C4 in the side chain of botcinins. The chain is Trans-enoyl reductase BOA5 from Botryotinia fuckeliana (strain B05.10) (Noble rot fungus).